A 330-amino-acid polypeptide reads, in one-letter code: Endo-1,4-beta-xylanase (330 aa).

One can recognise a GH10 domain in the interval 2–330 (CSSIPSLREV…KPAFWRVVNI (329 aa)). Glu-133 (proton donor) is an active-site residue. Glu-240 (nucleophile) is an active-site residue.

Belongs to the glycosyl hydrolase 10 (cellulase F) family. Cytoplasmic xylanase subfamily.

It is found in the cytoplasm. It carries out the reaction Endohydrolysis of (1-&gt;4)-beta-D-xylosidic linkages in xylans.. It functions in the pathway glycan degradation; xylan degradation. The protein is Endo-1,4-beta-xylanase (xynA) of Geobacillus stearothermophilus (Bacillus stearothermophilus).